A 304-amino-acid polypeptide reads, in one-letter code: tRNA dimethylallyltransferase (304 aa).

2–9 (GPTASGKT) is an ATP binding site. 4-9 (TASGKT) contacts substrate. Interaction with substrate tRNA regions lie at residues 27–30 (DSAL), 151–155 (QRINR), 232–237 (RCVGYR), and 265–272 (KRQITWLR).

The protein belongs to the IPP transferase family. As to quaternary structure, monomer. Mg(2+) is required as a cofactor.

It carries out the reaction adenosine(37) in tRNA + dimethylallyl diphosphate = N(6)-dimethylallyladenosine(37) in tRNA + diphosphate. Catalyzes the transfer of a dimethylallyl group onto the adenine at position 37 in tRNAs that read codons beginning with uridine, leading to the formation of N6-(dimethylallyl)adenosine (i(6)A). The protein is tRNA dimethylallyltransferase of Actinobacillus pleuropneumoniae serotype 5b (strain L20).